Consider the following 300-residue polypeptide: Very-long-chain enoyl-CoA reductase (300 aa).

The chain crosses the membrane as a helical span at residues S91–L111. A glycan (N-linked (GlcNAc...) asparagine) is linked at N163. The helical transmembrane segment at V191–Q211 threads the bilayer. N-linked (GlcNAc...) asparagine glycosylation occurs at N238. The helical transmembrane segment at I243–L263 threads the bilayer.

It belongs to the steroid 5-alpha reductase family.

The protein resides in the endoplasmic reticulum membrane. It carries out the reaction a very-long-chain 2,3-saturated fatty acyl-CoA + NADP(+) = a very-long-chain (2E)-enoyl-CoA + NADPH + H(+). Its pathway is lipid metabolism; fatty acid biosynthesis. In terms of biological role, catalyzes the last of the four reactions of the long-chain fatty acids elongation cycle. This endoplasmic reticulum-bound enzymatic process, allows the addition of 2 carbons to the chain of long- and very long-chain fatty acids/VLCFAs per cycle. This enzyme reduces the trans-2,3-enoyl-CoA fatty acid intermediate to an acyl-CoA that can be further elongated by entering a new cycle of elongation. Thereby, it participates in the production of VLCFAs of different chain lengths that are involved in multiple biological processes as precursors of membrane lipids and lipid mediators. In Dictyostelium discoideum (Social amoeba), this protein is Very-long-chain enoyl-CoA reductase (gpsn2).